Here is a 341-residue protein sequence, read N- to C-terminus: HTH-type transcriptional repressor PurR (341 aa).

An HTH lacI-type domain is found at 2 to 56 (ATIKDVAKHAGVSTTTVSHVINKTRFVAENTKAAVWAAIKELHYSPSAVARSLKV). Positions 4–23 (IKDVAKHAGVSTTTVSHVIN) form a DNA-binding region, H-T-H motif. A DNA-binding region spans residues 48 to 56 (SAVARSLKV). Residues Y73, R190, T192, F221, and D275 each contribute to the hypoxanthine site.

Homodimer.

It functions in the pathway purine metabolism; purine nucleotide biosynthesis [regulation]. Functionally, is the main repressor of the genes involved in the de novo synthesis of purine nucleotides, regulating purB, purC, purEK, purF, purHD, purL, purMN and guaBA expression. PurR is allosterically activated to bind its cognate DNA by binding the purine corepressors, hypoxanthine or guanine, thereby effecting transcription repression. The protein is HTH-type transcriptional repressor PurR of Yersinia pseudotuberculosis serotype O:1b (strain IP 31758).